We begin with the raw amino-acid sequence, 1881 residues long: Genome polyprotein (1881 aa).

The span at 1–16 (MAQTLSKISNKENASS) shows a compositional bias: polar residues. The disordered stretch occupies residues 1–93 (MAQTLSKISN…SHLKPASTDV (93 aa)). Basic and acidic residues predominate over residues 37–50 (EPLDHDSRRGRDPV). Positions 564–720 (DKVISCCTRR…DKWKSDNPGK (157 aa)) constitute an SF3 helicase domain. ATP is bound at residue 590 to 597 (GPPGCGKT). Tyr-1093 carries the post-translational modification O-(5'-phospho-RNA)-tyrosine. The Peptidase C24 domain occupies 1188–1341 (GVTHKNAIVS…KLIVPYVKVD (154 aa)). Catalysis depends on for 3CLpro activity residues His-1222, Glu-1243, and Cys-1305. A RdRp catalytic domain is found at 1593 to 1718 (HDRYCVDYSK…IVPPLISSVM (126 aa)).

In terms of assembly, homodimer. Interacts with NTPase, protein p30 and protease-polymerase p76. As to quaternary structure, interacts with capsid protein VP1 and protease-polymerase p76. Interacts with host IEF4e; this interaction plays a role in translation of viral proteins. Homooligomer. Interacts with Vpg, protein p32 and may interact with capsid protein VP1. Specific enzymatic cleavages in vivo yield mature proteins. Pro-Pol is first autocatalytically cleaved, then processes the whole polyprotein. In terms of processing, VPg is uridylylated by the polymerase and is covalently attached to the 5'-end of the polyadenylated genomic and subgenomic RNAs. This uridylylated form acts as a nucleotide-peptide primer for the polymerase.

The protein resides in the host endoplasmic reticulum membrane. The enzyme catalyses a ribonucleoside 5'-triphosphate + H2O = a ribonucleoside 5'-diphosphate + phosphate + H(+). The catalysed reaction is RNA(n) + a ribonucleoside 5'-triphosphate = RNA(n+1) + diphosphate. It catalyses the reaction Endopeptidase with a preference for cleavage when the P1 position is occupied by Glu-|-Xaa and the P1' position is occupied by Gly-|-Yaa.. Its function is as follows. Together with NTPase and NS4, initiates the formation of the replication complex. Induces the proliferation of the host smooth ER membranes forming long tubular structures. These remodeled membranes probably form the viral factories that contain the replication complex. Functionally, displays NTPase activity, but no helicase activity. Induces the formation of convoluted membranes derived from the host ER. These remodeled membranes probably form the viral factories that contain the replication complex. Together with NS2 and NS4, initiates the formation of the replication complex. In terms of biological role, probable key protein responsible for the formation of membrane alterations by the virus. Induces the formation of convoluted membranes derived from the host ER. These remodeled membranes probably form the viral factories that contain the replication complex. Together with NS2 and NTPase, initiates the formation of the replication complex. Viral genome-linked protein is covalently linked to the 5'-end of the positive-strand, negative-strand genomic RNAs and subgenomic RNA. Acts as a genome-linked replication primer. May recruit ribosome to viral RNA thereby promoting viral proteins translation. Interacts with host translation initiation complex to allow the translation of viral proteins. Its function is as follows. Protease-polymerase p76 processes the polyprotein: Pro-Pol is first released by autocleavage, then all other proteins are cleaved. Cleaves host translation initiation factor eIF4G1, eIF4G2 and PABP1 thereby inducing a shutdown of host protein synthesis. This shutdown may not prevent viral mRNA from being translated since viral Vpg replaces the cap. Also functions as an RNA-directed RNA polymerase, which replicates genomic and antigenomic viral RNA by recognizing specific signals. Also transcribes a subgenomic mRNA by initiating RNA synthesis internally on antigenomic RNA. This sgRNA codes for structural proteins. Catalyzes the covalent attachment VPg with viral RNAs. This Vesicular exanthema of swine virus serotype A48 (isolate Swine/United States/A48/1948) (VESV) protein is Genome polyprotein.